Here is a 1911-residue protein sequence, read N- to C-terminus: Adenylate kinase 9 (1911 aa).

The interval 31 to 285 (VCFVVFGKPG…LFMIVMDRLK (255 aa)) is adenylate kinase 1. 40 to 45 (GVGKTT) is an ATP binding site. An NMP 1 region spans residues 60–89 (EALPILEEQIAAETESGVMLQSMLISGQSI). AMP contacts are provided by residues 87–89 (QSI) and 116–119 (EIPS). The interval 160-205 (GQRQHNNTGYIYSRDQWDPEVIENHRKKKKEAQKDGKGEEEEEEEE) is LID 1. The segment at 185-210 (RKKKKEAQKDGKGEEEEEEEEQEEEE) is disordered. Residues 197 to 210 (GEEEEEEEEQEEEE) show a composition bias toward acidic residues. Residue Arg-229 coordinates AMP. Coiled-coil stretches lie at residues 443-485 (AEAT…EFGV) and 676-711 (LQKK…TEEE). 2 disordered regions span residues 728–796 (KAKE…TEIP) and 892–926 (DYEE…KERK). Positions 733-750 (EETDNEDEEEIEGDELEV) are enriched in acidic residues. Residues 751–761 (HEEPEASHDTR) show a composition bias toward basic and acidic residues. 2 stretches are compositionally biased toward acidic residues: residues 767–791 (EEFE…ETTV) and 892–919 (DYEE…EEGE). 2 adenylate kinase regions span residues 992–1203 (LRIC…ELIL) and 1412–1601 (IRII…KNVQ). 1001 to 1006 (GSGKTM) provides a ligand contact to ATP. Residues 1021-1052 (QFEEVLQEKLLLKTEKKVGPEFEEDSENEQAA) are NMP 2. Residues 1050 to 1052 (QAA) and 1079 to 1082 (VQLT) contribute to the AMP site. An LID 2 region spans residues 1124-1144 (DGFPRYPEEAQFLGDRGFFPD). 1421 to 1426 (KSGKTT) lines the ATP pocket. The tract at residues 1441–1472 (SIGGALRYVLNNHPETELALMLNWHLHKGMTA) is NMP 3. AMP-binding positions include Arg-1447, 1470–1472 (MTA), 1499–1502 (GYPV), Gln-1506, and Arg-1543. The tract at residues 1536 to 1550 (LEKENEQRLPYPLHN) is LID 3.

Belongs to the adenylate kinase family.

It is found in the cytoplasm. Its subcellular location is the nucleus. The protein resides in the cell projection. The protein localises to the cilium. It localises to the flagellum. It carries out the reaction a ribonucleoside 5'-phosphate + ATP = a ribonucleoside 5'-diphosphate + ADP. It catalyses the reaction AMP + ATP = 2 ADP. The enzyme catalyses GTP + AMP = GDP + ADP. The catalysed reaction is CMP + ATP = CDP + ADP. It carries out the reaction GTP + CMP = CDP + GDP. It catalyses the reaction dAMP + ATP = dADP + ADP. The enzyme catalyses dCMP + ATP = dCDP + ADP. The catalysed reaction is a ribonucleoside 5'-diphosphate + ATP = a ribonucleoside 5'-triphosphate + ADP. It carries out the reaction CDP + ATP = CTP + ADP. It catalyses the reaction CDP + GTP = CTP + GDP. The enzyme catalyses GDP + ATP = GTP + ADP. The catalysed reaction is UDP + ATP = UTP + ADP. It carries out the reaction GTP + UDP = UTP + GDP. It catalyses the reaction dTDP + GTP = dTTP + GDP. The enzyme catalyses dCDP + ATP = dCTP + ADP. The catalysed reaction is dCDP + GTP = dCTP + GDP. It carries out the reaction dGDP + ATP = dGTP + ADP. It catalyses the reaction dTDP + ATP = dTTP + ADP. The enzyme catalyses dADP + GTP = dATP + GDP. Functionally, broad-specificity nucleoside phosphate kinase involved in cellular nucleotide homeostasis by catalyzing nucleoside-phosphate interconversions. Similar to other adenylate kinases, preferentially catalyzes the phosphorylation of the nucleoside monophosphate AMP with ATP as phosphate donor to produce ADP. In vitro, can also catalyze the phosphorylation of CMP, dAMP and dCMP and use GTP as an alternate phosphate donor. Moreover, exhibits a diphosphate kinase activity, producing ATP, CTP, GTP, UTP, TTP, dATP, dCTP and dGTP from the corresponding diphosphate substrates with either ATP or GTP as phosphate donors. For this activity shows the following substrate preference CDP &gt; UDP &gt; ADP &gt; TDP. This chain is Adenylate kinase 9, found in Homo sapiens (Human).